The following is a 188-amino-acid chain: Ribosomal RNA small subunit methyltransferase G (188 aa).

S-adenosyl-L-methionine is bound by residues G69, F74, 119–120 (VQ), and R134.

It belongs to the methyltransferase superfamily. RNA methyltransferase RsmG family.

The protein resides in the cytoplasm. The catalysed reaction is guanosine(527) in 16S rRNA + S-adenosyl-L-methionine = N(7)-methylguanosine(527) in 16S rRNA + S-adenosyl-L-homocysteine. Its function is as follows. Specifically methylates the N7 position of guanine in position 527 of 16S rRNA. The sequence is that of Ribosomal RNA small subunit methyltransferase G from Campylobacter jejuni (strain RM1221).